Reading from the N-terminus, the 138-residue chain is uncharacterized protein (138 aa).

The next 3 helical transmembrane spans lie at 8 to 28 (LIIQ…AFLP), 47 to 67 (FIIC…TIIV), and 82 to 102 (TLPV…IAFI).

The protein to U.parvum UU007, UU008 and UU041.

It is found in the cell membrane. This is an uncharacterized protein from Ureaplasma parvum serovar 3 (strain ATCC 700970).